Consider the following 234-residue polypeptide: Purine nucleoside phosphorylase DeoD-type (234 aa).

H5 lines the a purine D-ribonucleoside pocket. Residues G21, R25, R44, and 88–91 (RVGT) each bind phosphate. A purine D-ribonucleoside contacts are provided by residues 178–180 (EME) and 202–203 (SD). The active-site Proton donor is the D203.

The protein belongs to the PNP/UDP phosphorylase family. As to quaternary structure, homohexamer; trimer of homodimers.

It carries out the reaction a purine D-ribonucleoside + phosphate = a purine nucleobase + alpha-D-ribose 1-phosphate. It catalyses the reaction a purine 2'-deoxy-D-ribonucleoside + phosphate = a purine nucleobase + 2-deoxy-alpha-D-ribose 1-phosphate. Functionally, catalyzes the reversible phosphorolytic breakdown of the N-glycosidic bond in the beta-(deoxy)ribonucleoside molecules, with the formation of the corresponding free purine bases and pentose-1-phosphate. This chain is Purine nucleoside phosphorylase DeoD-type, found in Lactococcus lactis subsp. cremoris (strain MG1363).